The primary structure comprises 142 residues: Transcription antitermination protein NusB (142 aa).

It belongs to the NusB family.

Functionally, involved in transcription antitermination. Required for transcription of ribosomal RNA (rRNA) genes. Binds specifically to the boxA antiterminator sequence of the ribosomal RNA (rrn) operons. In Roseiflexus castenholzii (strain DSM 13941 / HLO8), this protein is Transcription antitermination protein NusB.